The sequence spans 243 residues: Sugar fermentation stimulation protein homolog (243 aa).

This sequence belongs to the SfsA family.

The chain is Sugar fermentation stimulation protein homolog from Bdellovibrio bacteriovorus (strain ATCC 15356 / DSM 50701 / NCIMB 9529 / HD100).